We begin with the raw amino-acid sequence, 210 residues long: Putative 3-methyladenine DNA glycosylase (210 aa).

This sequence belongs to the DNA glycosylase MPG family.

The chain is Putative 3-methyladenine DNA glycosylase from Lactobacillus helveticus (strain DPC 4571).